We begin with the raw amino-acid sequence, 241 residues long: Small ribosomal subunit protein uS2 (241 aa).

This sequence belongs to the universal ribosomal protein uS2 family.

In Pectobacterium atrosepticum (strain SCRI 1043 / ATCC BAA-672) (Erwinia carotovora subsp. atroseptica), this protein is Small ribosomal subunit protein uS2.